The primary structure comprises 223 residues: MARRPGSSSRGPARSDRLPTEAVTSARKPHAAAPTPPASPDPGLVLLGEFGRPHGLHGEVRLKSHTSEPLAIAGYGPLHASDGRTLELANVRPAAGSSPDLLIVRVKGVDDRTGAEALNRVTLAIARERLGEVEDEDEFFLTDLIGLTVEDGAGTVIGTIVAVPNFGGGDLLEIRPAAGGPTALLPFTKAFVPSLDIAGGKVVADPPDDLFAPPGPKPADDPG.

Residues 1 to 12 (MARRPGSSSRGP) show a composition bias toward low complexity. Disordered stretches follow at residues 1–44 (MARR…DPGL) and 203–223 (VADP…DDPG). One can recognise a PRC barrel domain in the interval 135–210 (DEDEFFLTDL…KVVADPPDDL (76 aa)).

This sequence belongs to the RimM family. In terms of assembly, binds ribosomal protein uS19.

The protein localises to the cytoplasm. Functionally, an accessory protein needed during the final step in the assembly of 30S ribosomal subunit, possibly for assembly of the head region. Essential for efficient processing of 16S rRNA. May be needed both before and after RbfA during the maturation of 16S rRNA. It has affinity for free ribosomal 30S subunits but not for 70S ribosomes. The sequence is that of Ribosome maturation factor RimM from Methylorubrum extorquens (strain CM4 / NCIMB 13688) (Methylobacterium extorquens).